Here is a 66-residue protein sequence, read N- to C-terminus: Large ribosomal subunit protein uL29 (66 aa).

Belongs to the universal ribosomal protein uL29 family.

This chain is Large ribosomal subunit protein uL29, found in Borrelia hermsii (strain HS1 / DAH).